Consider the following 369-residue polypeptide: UDP-N-acetyl-3-dehydro-alpha-D-glucosamine 3-aminotranferase (369 aa).

At lysine 190 the chain carries N6-(pyridoxal phosphate)lysine.

It belongs to the DegT/DnrJ/EryC1 family. It depends on pyridoxal 5'-phosphate as a cofactor.

The enzyme catalyses UDP-2-acetamido-3-amino-2,3-dideoxy-alpha-D-glucopyranose + 2-oxoglutarate = UDP-2-acetamido-3-dehydro-2-deoxy-alpha-D-glucopyranose + L-glutamate. Its pathway is bacterial outer membrane biogenesis; LPS lipid A biosynthesis. In terms of biological role, aminotranferase involved in the synthesis of 2,3-diamino-2,3-dideoxy-D-glucopyranose (GlcN3N), which is a component of lipid A in some species. Catalyzes the amination of UDP-2-acetamido-3-dehydro-2-deoxy-alpha-D-glucopyranose (UDP-3-oxo-GlcNAc) to UDP-2-acetamido-3-amino-2,3-dideoxy-alpha-D-glucopyranose (UDP-GlcNAc3N), using L-glutamate as the amine donor. Other amine donors, such as alanine and glutamine, can substitute for glutamate, but product formation is slower. The chain is UDP-N-acetyl-3-dehydro-alpha-D-glucosamine 3-aminotranferase from Acidithiobacillus ferrooxidans (strain ATCC 23270 / DSM 14882 / CIP 104768 / NCIMB 8455) (Ferrobacillus ferrooxidans (strain ATCC 23270)).